The chain runs to 61 residues: Furostanol glycoside 26-O-beta-glucosidase (61 aa).

Catalysis depends on Asp33, which acts as the Proton donor/acceptor. Residue Asp33 coordinates D-glucose.

Belongs to the glycosyl hydrolase 3 family. Monomer. In terms of processing, glycosylated. As to expression, expressed in petioles and leaves, but not in fruits.

It carries out the reaction protodioscin + H2O = 26-deglucoprotodioscin + D-glucose. Its activity is regulated as follows. Inhibited by Hg(2+) and D-glucono-1,5-lactone. In terms of biological role, beta-glucosidase highly specific for the cleavage of C-26-bound glucose moiety of furostanol glycosides torvosides A and H. Hydrolyzes only p-nitrophenyl-beta-glucoside, but not p-nitrophenyl-beta-D-fucoside, p-nitrophenyl-beta-L-fucoside, p-nitrophenyl-beta-D-xyloside, p-nitrophenyl-beta-D-galactoside, p-nitrophenyl-beta-D-NAc-glucosamine, p-nitrophenyl-beta-D-mannoside or any of the p-nitrophenyl-alpha-glycosides tested. The polypeptide is Furostanol glycoside 26-O-beta-glucosidase (Solanum torvum (Turkey berry)).